The chain runs to 543 residues: CTP synthase (543 aa).

The amidoligase domain stretch occupies residues 1–267 (MKQTKYIFVT…LNPIAEILDL (267 aa)). Position 15 (S15) interacts with CTP. UTP is bound at residue S15. Residues 16–21 (SLGKGI) and D73 each bind ATP. 2 residues coordinate Mg(2+): D73 and E141. CTP contacts are provided by residues 148 to 150 (DIE), 188 to 193 (KTKPTQ), and K224. Residues 188 to 193 (KTKPTQ) and K224 contribute to the UTP site. The Glutamine amidotransferase type-1 domain maps to 292-543 (KIAFVGKYVD…IKAAINYEDN (252 aa)). G354 serves as a coordination point for L-glutamine. Catalysis depends on C381, which acts as the Nucleophile; for glutamine hydrolysis. L-glutamine-binding positions include 382–385 (LGMQ), E405, and R473. Catalysis depends on residues H516 and E518.

It belongs to the CTP synthase family. Homotetramer.

The catalysed reaction is UTP + L-glutamine + ATP + H2O = CTP + L-glutamate + ADP + phosphate + 2 H(+). It catalyses the reaction L-glutamine + H2O = L-glutamate + NH4(+). The enzyme catalyses UTP + NH4(+) + ATP = CTP + ADP + phosphate + 2 H(+). It functions in the pathway pyrimidine metabolism; CTP biosynthesis via de novo pathway; CTP from UDP: step 2/2. Its activity is regulated as follows. Allosterically activated by GTP, when glutamine is the substrate; GTP has no effect on the reaction when ammonia is the substrate. The allosteric effector GTP functions by stabilizing the protein conformation that binds the tetrahedral intermediate(s) formed during glutamine hydrolysis. Inhibited by the product CTP, via allosteric rather than competitive inhibition. Its function is as follows. Catalyzes the ATP-dependent amination of UTP to CTP with either L-glutamine or ammonia as the source of nitrogen. Regulates intracellular CTP levels through interactions with the four ribonucleotide triphosphates. This is CTP synthase from Campylobacter jejuni subsp. doylei (strain ATCC BAA-1458 / RM4099 / 269.97).